Reading from the N-terminus, the 338-residue chain is Protein pelota homolog (338 aa).

The protein belongs to the eukaryotic release factor 1 family. Pelota subfamily. As to quaternary structure, monomer. A divalent metal cation serves as cofactor.

The protein localises to the cytoplasm. In terms of biological role, may function in recognizing stalled ribosomes, interact with stem-loop structures in stalled mRNA molecules, and effect endonucleolytic cleavage of the mRNA. May play a role in the release non-functional ribosomes and degradation of damaged mRNAs. Has endoribonuclease activity. The sequence is that of Protein pelota homolog from Caldivirga maquilingensis (strain ATCC 700844 / DSM 13496 / JCM 10307 / IC-167).